The sequence spans 40 residues: Photosystem II reaction center protein Y (40 aa).

A helical transmembrane segment spans residues 5 to 23 (LVLVASPILLAVGWAGFNI).

This sequence belongs to the PsbY family. PSII is composed of 1 copy each of membrane proteins PsbA, PsbB, PsbC, PsbD, PsbE, PsbF, PsbH, PsbI, PsbJ, PsbK, PsbL, PsbM, PsbT, PsbX, PsbY, PsbZ, Psb30/Ycf12, peripheral proteins PsbO, CyanoQ (PsbQ), PsbU, PsbV and a large number of cofactors. It forms dimeric complexes.

The protein resides in the cellular thylakoid membrane. In terms of biological role, loosely associated component of the core of photosystem II (PSII), it is not always seen in crystals. PSII is a light-driven water plastoquinone oxidoreductase, using light energy to abstract electrons from H(2)O, generating a proton gradient subsequently used for ATP formation. The sequence is that of Photosystem II reaction center protein Y from Synechococcus sp. (strain RCC307).